A 120-amino-acid chain; its full sequence is Chaperonin GroEL (120 aa).

23-27 lines the ATP pocket; the sequence is DGTTT.

Belongs to the chaperonin (HSP60) family. As to quaternary structure, forms a cylinder of 14 subunits composed of two heptameric rings stacked back-to-back. Interacts with the co-chaperonin GroES.

Its subcellular location is the cytoplasm. It catalyses the reaction ATP + H2O + a folded polypeptide = ADP + phosphate + an unfolded polypeptide.. In terms of biological role, together with its co-chaperonin GroES, plays an essential role in assisting protein folding. The GroEL-GroES system forms a nano-cage that allows encapsulation of the non-native substrate proteins and provides a physical environment optimized to promote and accelerate protein folding. In Mycolicibacterium rhodesiae (Mycobacterium rhodesiae), this protein is Chaperonin GroEL.